The sequence spans 60 residues: Temporin-MT5 (60 aa).

The signal sequence occupies residues 1–22 (MFTLKKPLLLLFFLATINLSLC). Residues 23 to 44 (EQERNAEEERRDEPDERNAEVE) constitute a propeptide, removed in mature form. Phe58 is modified (phenylalanine amide).

The protein belongs to the frog skin active peptide (FSAP) family. Temporin subfamily. Expressed by the skin glands.

The protein localises to the secreted. Functionally, antimicrobial peptide. This chain is Temporin-MT5, found in Amolops mantzorum (Sichuan torrent frog).